A 90-amino-acid polypeptide reads, in one-letter code: uncharacterized protein (90 aa).

2 consecutive transmembrane segments (helical) span residues 23-43 (ITTIHLLSSIGAINWGLVGLF) and 48-68 (VTLLFGSFPIIVTIFYIIIGF).

It is found in the cell membrane. This is an uncharacterized protein from Rickettsia prowazekii (strain Madrid E).